The primary structure comprises 1173 residues: MDAEIFFNPYLHTKRSRRDWRAEPAADNKESFLQIVPRGVLYDGATGLIKTQCELSPRMFFEDREYVLDPVMVWPGLDIAADGEAVPPCDFVFHTFDQVVSLVFAEGRGRARRWRQHISPAGNVIRLFGATALGTPVCVNVFGQKSYFYCENRPGEDLRDVIHDLADASRSPGPLSASPSRRAPLVAVRLRPGDIPHLYRVSFNNWSMARKVGALMVQEGRRAYEIGVDPLARFLIDRKIPSFGWLRVGRFSRRCNGQTSTAVIELDCQVGDVVAGQPLPNWPPYRCLSFDIECMSASGAFPQAEVLDDIVIQISCVCFVVGGSGAHRFTFAEKHLFTIGSCAPVEDVWVYTFPSEYEMLLGFFIFFNRFSPDFLTGYNINGFDIKYLLHRMCRVYQKDAGRFTKLRRGGRFFVNSPDGSGDAFGGRSGVIKVFCAGTVVLDMYPVCSAKTSAPNYKLDTMAERYLGQRKEDLSYKEIPVAFLGGEEGRARVGKYCVQDGARQGPLNVIAYHYEAAASPNLARIPLRRVIFDGQQIRIYTCILEECSARGMVLPSLPSSPPSSGGDGAGLEGGDGGTAGRRKKKRSGSAPDGEDEDDPEGGDEGENGECRENGLEKEGSQGSASGNVGYQGATVLAPECGYHHNPILVFDFASLYPSIIMSNNLCYSTLLVDGSPPVPDEDVLEVVVGEATRYRFVREHVRRSLLAELLVRWLKQRKLVRDAMKACGDEKQRMFMDKQQLALKVTCNAFYGFTGVAAPMLPCLPIAASITKIGRDMLLATSAYMERHCNDVEFLVSEVGVPREAVDRDALRVKIVYGDTDSVFVGFRGIGREVLVKVAGKLAAAVTRDLFRDPVRLEFEKMFVSLMMICKKRYIGKVYGENKLCMKGVDLVRRHACAFVRSIVSEVVDVIFHDEAVSEGAMRLSEMSFEELRRQGVPVGFFPVIRRLCDARDDLFLDRVPVAQLVLSSVLSQDASRYKQKNLPHLAVYRSLVERGEELPGVGDRIEYVLTCPDESKKRAPNYEVAEDPAHVREAKIPIHAEKYFDQIVKAVTNVLLPVFPKDMPRRERFFAYVLPIRTYLPEVFLRMSKEDRECGAYLARESGLGMNSFIVYGEDTCGSRVGEGPGRGEGLGVGGGEGTRPPRKNGHARLVSGCLYGSRPFNKKDRFVTLHIE.

2 disordered regions span residues 554-625 and 1123-1144; these read PSLP…SASG and EGPG…PPRK. Residues 564–578 are compositionally biased toward gly residues; the sequence is GGDGAGLEGGDGGTA. Over residues 591-606 the composition is skewed to acidic residues; that stretch reads DGEDEDDPEGGDEGEN. A compositionally biased stretch (basic and acidic residues) spans 607–618; that stretch reads GECRENGLEKEG. A compositionally biased stretch (gly residues) spans 1123-1138; sequence EGPGRGEGLGVGGGEG.

The protein belongs to the DNA polymerase type-B family.

Its subcellular location is the host nucleus. It carries out the reaction DNA(n) + a 2'-deoxyribonucleoside 5'-triphosphate = DNA(n+1) + diphosphate. The sequence is that of DNA polymerase catalytic subunit (UL54) from Rattus.